Reading from the N-terminus, the 158-residue chain is MPYDAEILVVGCGNILFKDDGFGPEVIKALEEYFKDREKPDNVMFIDAGTGGPHFVFSLPHEEWKKMIVVDVVEFNAEPGTLRKFDVTEIPKGSYENMHTWPVSQPLHELSEKIDVVVIGCKPKEISAPNVEMGLTPPVKKAIPRAIQMILDEIGVSK.

Belongs to the peptidase A31 family.

The protein is Coenzyme F420 hydrogenase subunit delta (frhD) of Methanothermobacter thermautotrophicus (strain ATCC 29096 / DSM 1053 / JCM 10044 / NBRC 100330 / Delta H) (Methanobacterium thermoautotrophicum).